Reading from the N-terminus, the 465-residue chain is Methylenetetrahydrofolate--tRNA-(uracil-5-)-methyltransferase TrmFO (465 aa).

FAD is bound at residue 3 to 8; that stretch reads GAGLAG.

This sequence belongs to the MnmG family. TrmFO subfamily. The cofactor is FAD.

It localises to the cytoplasm. The enzyme catalyses uridine(54) in tRNA + (6R)-5,10-methylene-5,6,7,8-tetrahydrofolate + NADH + H(+) = 5-methyluridine(54) in tRNA + (6S)-5,6,7,8-tetrahydrofolate + NAD(+). It carries out the reaction uridine(54) in tRNA + (6R)-5,10-methylene-5,6,7,8-tetrahydrofolate + NADPH + H(+) = 5-methyluridine(54) in tRNA + (6S)-5,6,7,8-tetrahydrofolate + NADP(+). Its function is as follows. Catalyzes the folate-dependent formation of 5-methyl-uridine at position 54 (M-5-U54) in all tRNAs. The protein is Methylenetetrahydrofolate--tRNA-(uracil-5-)-methyltransferase TrmFO of Bradyrhizobium sp. (strain ORS 278).